Consider the following 203-residue polypeptide: Small ribosomal subunit protein uS4 (203 aa).

Residues 93–156 form the S4 RNA-binding domain; the sequence is RRLDNVVYRL…MKVPAILEAV (64 aa).

The protein belongs to the universal ribosomal protein uS4 family. As to quaternary structure, part of the 30S ribosomal subunit. Contacts protein S5. The interaction surface between S4 and S5 is involved in control of translational fidelity.

Functionally, one of the primary rRNA binding proteins, it binds directly to 16S rRNA where it nucleates assembly of the body of the 30S subunit. Its function is as follows. With S5 and S12 plays an important role in translational accuracy. In Streptococcus uberis (strain ATCC BAA-854 / 0140J), this protein is Small ribosomal subunit protein uS4.